Reading from the N-terminus, the 440-residue chain is MESQQLSQHSPIFHGSACASVTSKEVQTTQDPLDISASKTEECEKVSTQANSQQPTTPPSSAVPENHHHASPQAAQVPLPQNGPYPQQRMMNTQQANISGWPVYGHPSLMPYPPYQMSPMYAPPGAQSQFTQYPQYVGTHLNTPSPESGNSFPDSSSAKSNMTSTNQHVRPPPILTSPNDFLNWVKIYIKFLQNSNLGDIIPTATRKAVRQMTDDELTFLCHTFQLFAPSQFLPPWVKDILSVDYTDIMKILSKSINKMQSDTQEVNDITTLATLHYNGSTPADAFEAEVTNILDRLNNNGIPINNKVACQFIMRGLSGEYKFLPYARHRCIHMTVADLFSDIHSMYEEQQESKRNKSTYRRSPSDEKKDSRTYTNTTKPKSITRNSQKPNNSQSRTARAHNVSTFNNSPGPDNDLIRGSTTEPIQLKNTHDLHLRPGTY.

Polar residues-rich tracts occupy residues S20–D31, V46–P55, and V137–H168. Disordered stretches follow at residues S20–P84, V137–P173, and Q350–P424. Positions N299 to H401 are RNA-binding. Residues S363 to R372 show a composition bias toward basic and acidic residues. Over residues T373–G411 the composition is skewed to polar residues.

As to quaternary structure, homotrimer.

Its subcellular location is the cytoplasm. Functionally, capsid protein (CA) is the structural component of the virus-like particle (VLP), forming the shell that encapsulates the retrotransposons dimeric RNA genome. The particles are assembled from trimer-clustered units and there are holes in the capsid shells that allow for the diffusion of macromolecules. CA also has nucleocapsid-like chaperone activity, promoting primer tRNA(i)-Met annealing to the multipartite primer-binding site (PBS), dimerization of Ty1 RNA and initiation of reverse transcription. This chain is Transposon Ty1-BL Gag polyprotein (TY1A-BL), found in Saccharomyces cerevisiae (strain ATCC 204508 / S288c) (Baker's yeast).